Consider the following 298-residue polypeptide: Factor-induced gene 1 protein (298 aa).

Helical transmembrane passes span 17-37 (IFAL…LIGC), 163-183 (VLMA…YVTV), 195-215 (FLLL…MWTH), and 243-263 (VMAW…WLIF). The residue at position 288 (S288) is a Phosphoserine. T293 bears the Phosphothreonine mark. S296 is modified (phosphoserine).

The protein localises to the membrane. Its function is as follows. Required for efficient mating. The chain is Factor-induced gene 1 protein (FIG1) from Saccharomyces cerevisiae (strain ATCC 204508 / S288c) (Baker's yeast).